Reading from the N-terminus, the 222-residue chain is Probable nicotinate-nucleotide adenylyltransferase (222 aa).

This sequence belongs to the NadD family.

The enzyme catalyses nicotinate beta-D-ribonucleotide + ATP + H(+) = deamido-NAD(+) + diphosphate. Its pathway is cofactor biosynthesis; NAD(+) biosynthesis; deamido-NAD(+) from nicotinate D-ribonucleotide: step 1/1. Functionally, catalyzes the reversible adenylation of nicotinate mononucleotide (NaMN) to nicotinic acid adenine dinucleotide (NaAD). The chain is Probable nicotinate-nucleotide adenylyltransferase from Xylella fastidiosa (strain M12).